We begin with the raw amino-acid sequence, 236 residues long: Homeobox protein notochord (236 aa).

The homeobox DNA-binding region spans 138–197; it reads MKRIRTVFTPEQLEKLEKEFLKQQYMVGTERVDLASTLNLTETQVKVWFQNRRIKWRKQS. The interval 209 to 236 is disordered; that stretch reads GVIPADSSDHTDDSRETEEDEDDLDVEL. A compositionally biased stretch (acidic residues) spans 223 to 236; the sequence is RETEEDEDDLDVEL.

In terms of tissue distribution, expressed throughout the embryo during pre-gastrula stages. Localized to the dorsal lip of the blastopore (Spemann organizer) during early gastrulation, after which expression continues in tissues derived from the organizer. Expressed in the notochord during mid-gastrulation. During neurulation, expressed in the notochord, archenteron roof and the prospective floor plate. Also expressed in the region that will become the epiphysis, the pineal body precursor. By the early tailbud stages, expression is limited to posterior notochord and floor plate before becoming restricted to the tip of the tail in the tadpole.

It is found in the nucleus. In terms of biological role, transcriptional repressor. Plays a fundamental role in notochord formation, acting within the mesodermal region. In Xenopus laevis (African clawed frog), this protein is Homeobox protein notochord (noto).